Reading from the N-terminus, the 90-residue chain is Acylphosphatase (90 aa).

The Acylphosphatase-like domain occupies 3-90; the sequence is AVTLKATGRV…QNYHDFRITN (88 aa). Residues Arg-18 and Asn-36 contribute to the active site.

The protein belongs to the acylphosphatase family.

It catalyses the reaction an acyl phosphate + H2O = a carboxylate + phosphate + H(+). The polypeptide is Acylphosphatase (acyP) (Lactiplantibacillus plantarum (strain ATCC BAA-793 / NCIMB 8826 / WCFS1) (Lactobacillus plantarum)).